The primary structure comprises 816 residues: Leucine--tRNA ligase (816 aa).

Positions 40-51 (SYPSGSQLHAGH) match the 'HIGH' region motif. Positions 576–580 (KMSKS) match the 'KMSKS' region motif. Position 579 (K579) interacts with ATP.

The protein belongs to the class-I aminoacyl-tRNA synthetase family.

The protein localises to the cytoplasm. It catalyses the reaction tRNA(Leu) + L-leucine + ATP = L-leucyl-tRNA(Leu) + AMP + diphosphate. The chain is Leucine--tRNA ligase from Clostridium perfringens (strain ATCC 13124 / DSM 756 / JCM 1290 / NCIMB 6125 / NCTC 8237 / Type A).